We begin with the raw amino-acid sequence, 879 residues long: DNA double-strand break repair Rad50 ATPase (879 aa).

Residues 32–38 (NGAGKSS) and Gln139 contribute to the ATP site. Coiled-coil stretches lie at residues 184–304 (IELQ…NKIK) and 342–436 (EIKG…NQVK). The region spanning 394-492 (LQKLNEDLNN…LISELNQIIN (99 aa)) is the Zinc-hook domain. Positions 440 and 443 each coordinate Zn(2+). The stretch at 502–722 (IRNLADYNNL…LITAYDKLKK (221 aa)) forms a coiled coil. 786–791 (LLSGGE) contributes to the ATP binding site.

This sequence belongs to the SMC family. RAD50 subfamily. In terms of assembly, homodimer. Forms a heterotetramer composed of two Mre11 subunits and two Rad50 subunits. Zn(2+) is required as a cofactor.

Part of the Rad50/Mre11 complex, which is involved in the early steps of DNA double-strand break (DSB) repair. The complex may facilitate opening of the processed DNA ends to aid in the recruitment of HerA and NurA. Rad50 controls the balance between DNA end bridging and DNA resection via ATP-dependent structural rearrangements of the Rad50/Mre11 complex. The sequence is that of DNA double-strand break repair Rad50 ATPase from Sulfurisphaera tokodaii (strain DSM 16993 / JCM 10545 / NBRC 100140 / 7) (Sulfolobus tokodaii).